We begin with the raw amino-acid sequence, 957 residues long: Glycine dehydrogenase (decarboxylating) (957 aa).

Lys-708 carries the N6-(pyridoxal phosphate)lysine modification.

This sequence belongs to the GcvP family. The glycine cleavage system is composed of four proteins: P, T, L and H. Requires pyridoxal 5'-phosphate as cofactor.

It carries out the reaction N(6)-[(R)-lipoyl]-L-lysyl-[glycine-cleavage complex H protein] + glycine + H(+) = N(6)-[(R)-S(8)-aminomethyldihydrolipoyl]-L-lysyl-[glycine-cleavage complex H protein] + CO2. The glycine cleavage system catalyzes the degradation of glycine. The P protein binds the alpha-amino group of glycine through its pyridoxal phosphate cofactor; CO(2) is released and the remaining methylamine moiety is then transferred to the lipoamide cofactor of the H protein. The sequence is that of Glycine dehydrogenase (decarboxylating) from Escherichia coli (strain ATCC 8739 / DSM 1576 / NBRC 3972 / NCIMB 8545 / WDCM 00012 / Crooks).